A 49-amino-acid polypeptide reads, in one-letter code: uncharacterized protein (49 aa).

This is an uncharacterized protein from Saccharomyces cerevisiae (strain ATCC 204508 / S288c) (Baker's yeast).